Consider the following 740-residue polypeptide: Phosphoribosylformylglycinamidine synthase subunit PurL (740 aa).

His-55 is a catalytic residue. Positions 58 and 97 each coordinate ATP. Glu-99 serves as a coordination point for Mg(2+). Substrate-binding positions include 100–103 (SHNH) and Arg-122. The active-site Proton acceptor is His-101. Residue Asp-123 participates in Mg(2+) binding. Residue Gln-246 coordinates substrate. Position 276 (Asp-276) interacts with Mg(2+). A substrate-binding site is contributed by 320 to 322 (ESQ). ATP-binding residues include Asp-501 and Gly-538. Asn-539 provides a ligand contact to Mg(2+). Ser-541 contributes to the substrate binding site.

It belongs to the FGAMS family. As to quaternary structure, monomer. Part of the FGAM synthase complex composed of 1 PurL, 1 PurQ and 2 PurS subunits.

It is found in the cytoplasm. The enzyme catalyses N(2)-formyl-N(1)-(5-phospho-beta-D-ribosyl)glycinamide + L-glutamine + ATP + H2O = 2-formamido-N(1)-(5-O-phospho-beta-D-ribosyl)acetamidine + L-glutamate + ADP + phosphate + H(+). The protein operates within purine metabolism; IMP biosynthesis via de novo pathway; 5-amino-1-(5-phospho-D-ribosyl)imidazole from N(2)-formyl-N(1)-(5-phospho-D-ribosyl)glycinamide: step 1/2. Part of the phosphoribosylformylglycinamidine synthase complex involved in the purines biosynthetic pathway. Catalyzes the ATP-dependent conversion of formylglycinamide ribonucleotide (FGAR) and glutamine to yield formylglycinamidine ribonucleotide (FGAM) and glutamate. The FGAM synthase complex is composed of three subunits. PurQ produces an ammonia molecule by converting glutamine to glutamate. PurL transfers the ammonia molecule to FGAR to form FGAM in an ATP-dependent manner. PurS interacts with PurQ and PurL and is thought to assist in the transfer of the ammonia molecule from PurQ to PurL. In Lacticaseibacillus casei (Lactobacillus casei), this protein is Phosphoribosylformylglycinamidine synthase subunit PurL.